Consider the following 354-residue polypeptide: ORC1-type DNA replication protein 9 (354 aa).

Residues Thr-63–Cys-67, Tyr-195, and Arg-207 each bind ATP.

This sequence belongs to the CDC6/cdc18 family.

In terms of biological role, involved in regulation of DNA replication. In Halobacterium salinarum (strain ATCC 700922 / JCM 11081 / NRC-1) (Halobacterium halobium), this protein is ORC1-type DNA replication protein 9 (orc9-1).